The sequence spans 153 residues: 3-hydroxyacyl-[acyl-carrier-protein] dehydratase FabZ (153 aa).

H54 is an active-site residue.

This sequence belongs to the thioester dehydratase family. FabZ subfamily.

It localises to the cytoplasm. The catalysed reaction is a (3R)-hydroxyacyl-[ACP] = a (2E)-enoyl-[ACP] + H2O. Its function is as follows. Involved in unsaturated fatty acids biosynthesis. Catalyzes the dehydration of short chain beta-hydroxyacyl-ACPs and long chain saturated and unsaturated beta-hydroxyacyl-ACPs. The protein is 3-hydroxyacyl-[acyl-carrier-protein] dehydratase FabZ of Shewanella amazonensis (strain ATCC BAA-1098 / SB2B).